We begin with the raw amino-acid sequence, 484 residues long: Perphorin-2 (484 aa).

N-linked (GlcNAc...) asparagine glycans are attached at residues N16, N240, N256, N265, N326, N330, N356, and N411.

The protein resides in the secreted. Its subcellular location is the extracellular space. It localises to the extracellular matrix. Its function is as follows. May be involved in conversion of asexual males and females to the sexual pathway. In Volvox carteri (Green alga), this protein is Perphorin-2.